The primary structure comprises 113 residues: Molt-inhibiting hormone (113 aa).

The first 35 residues, 1 to 35 (MMSLAHSKFSCQRTRLLAVVLLAALWSSSLQQAAA), serve as a signal peptide directing secretion. Intrachain disulfides connect cysteine 42/cysteine 79, cysteine 59/cysteine 75, and cysteine 62/cysteine 88.

This sequence belongs to the arthropod CHH/MIH/GIH/VIH hormone family.

Its subcellular location is the secreted. Functionally, inhibits Y-organs where molting hormone (ecdysteroid) is secreted. A molting cycle is initiated when MIH secretion diminishes or stops. The chain is Molt-inhibiting hormone from Callinectes sapidus (Blue crab).